Here is a 518-residue protein sequence, read N- to C-terminus: ATP synthase F(1) complex catalytic subunit beta, mitochondrial (518 aa).

ADP-binding residues include Gly-199, Val-200, Gly-201, Lys-202, Thr-203, and Val-204. ATP is bound at residue Gly-199. Residues Gly-199, Val-200, Gly-201, Lys-202, and Thr-203 each contribute to the phosphate site. Residues Gly-201, Lys-202, Thr-203, and Val-204 each coordinate ATP. Thr-203 serves as a coordination point for Mg(2+). Glu-228 contacts Mg(2+). Arg-229 provides a ligand contact to ATP.

It belongs to the ATPase alpha/beta chains family. In terms of assembly, homotrimer. Component of the ATP synthase complex composed at least of ATP5F1A/subunit alpha, ATP5F1B/subunit beta, ATP5MC1/subunit c (homooctomer), MT-ATP6/subunit a, MT-ATP8/subunit 8, ATP5ME/subunit e, ATP5MF/subunit f, ATP5MG/subunit g, ATP5MK/subunit k, ATP5MJ/subunit j, ATP5F1C/subunit gamma, ATP5F1D/subunit delta, ATP5F1E/subunit epsilon, ATP5PF/subunit F6, ATP5PB/subunit b, ATP5PD/subunit d, ATP5PO/subunit OSCP. ATP synthase complex consists of a soluble F(1) head domain (subunits alpha(3) and beta(3)) - the catalytic core - and a membrane F(0) domain - the membrane proton channel (subunits c, a, 8, e, f, g, k and j). These two domains are linked by a central stalk (subunits gamma, delta, and epsilon) rotating inside the F1 region and a stationary peripheral stalk (subunits F6, b, d, and OSCP).

It is found in the mitochondrion inner membrane. The catalysed reaction is ATP + H2O + 4 H(+)(in) = ADP + phosphate + 5 H(+)(out). Its function is as follows. Catalytic subunit beta, of the mitochondrial membrane ATP synthase complex (F(1)F(0) ATP synthase or Complex V) that produces ATP from ADP in the presence of a proton gradient across the membrane which is generated by electron transport complexes of the respiratory chain. ATP synthase complex consist of a soluble F(1) head domain - the catalytic core - and a membrane F(1) domain - the membrane proton channel. These two domains are linked by a central stalk rotating inside the F(1) region and a stationary peripheral stalk. During catalysis, ATP synthesis in the catalytic domain of F(1) is coupled via a rotary mechanism of the central stalk subunits to proton translocation. In vivo, can only synthesize ATP although its ATP hydrolase activity can be activated artificially in vitro. With the subunit alpha (ATP5F1A), forms the catalytic core in the F(1) domain. The protein is ATP synthase F(1) complex catalytic subunit beta, mitochondrial of Cyprinus carpio (Common carp).